The following is a 305-amino-acid chain: Putative UDP-glucose 4-epimerase (305 aa).

NAD(+)-binding positions include 10 to 11 (FI), 30 to 35 (DNLTTG), 50 to 51 (DI), and 71 to 75 (QAAQI). Substrate contacts are provided by Ser115 and Tyr140. 2 residues coordinate NAD(+): Tyr140 and Lys144. Residue Tyr140 is the Proton acceptor of the active site. Residues Asn169, 183-184 (VI), 198-200 (IIF), Arg207, and 263-266 (REGE) each bind substrate.

This sequence belongs to the NAD(P)-dependent epimerase/dehydratase family. NAD(+) serves as cofactor.

The enzyme catalyses UDP-alpha-D-glucose = UDP-alpha-D-galactose. Its pathway is carbohydrate metabolism; galactose metabolism. Functionally, involved in the metabolism of galactose. Catalyzes the conversion of UDP-galactose (UDP-Gal) to UDP-glucose (UDP-Glc) through a mechanism involving the transient reduction of NAD. The polypeptide is Putative UDP-glucose 4-epimerase (Methanocaldococcus jannaschii (strain ATCC 43067 / DSM 2661 / JAL-1 / JCM 10045 / NBRC 100440) (Methanococcus jannaschii)).